A 632-amino-acid chain; its full sequence is DNA ligase (632 aa).

NAD(+) contacts are provided by residues 45-49 (NEDYD) and 89-90 (SI). Lys-127 serves as the catalytic N6-AMP-lysine intermediate. 3 residues coordinate NAD(+): Arg-143, Glu-174, and Lys-286. Zn(2+)-binding residues include Cys-374, Cys-377, Cys-390, and Cys-396. The BRCT domain occupies 561–632 (DKRIVFTGKM…EADYLSKITM (72 aa)).

It belongs to the NAD-dependent DNA ligase family. LigA subfamily. Mg(2+) is required as a cofactor. The cofactor is Mn(2+).

The catalysed reaction is NAD(+) + (deoxyribonucleotide)n-3'-hydroxyl + 5'-phospho-(deoxyribonucleotide)m = (deoxyribonucleotide)n+m + AMP + beta-nicotinamide D-nucleotide.. DNA ligase that catalyzes the formation of phosphodiester linkages between 5'-phosphoryl and 3'-hydroxyl groups in double-stranded DNA using NAD as a coenzyme and as the energy source for the reaction. It is essential for DNA replication and repair of damaged DNA. The chain is DNA ligase from Vesicomyosocius okutanii subsp. Calyptogena okutanii (strain HA).